A 523-amino-acid chain; its full sequence is Asc-type amino acid transporter 1 (523 aa).

Residues 1 to 28 (MAGHTQQPSGRGNPRPAPSPSPVPGTVP) form a disordered region. Over residues 15–25 (RPAPSPSPVPG) the composition is skewed to pro residues. A run of 9 helical transmembrane segments spans residues 40–60 (IGLL…GIFI), 72–92 (VGLA…GSLC), 113–133 (IFGG…MYPT), 268–288 (AIFI…IAYF), 310–330 (LLGY…FGGI), 362–382 (CTPI…MLVG), 388–408 (INYV…GLLL), 424–444 (LLIP…SFIS), and 448–468 (VCGV…LGVF). The disordered stretch occupies residues 499–523 (APEEEENGPCPPSLLPATDKPSKPQ).

The protein belongs to the amino acid-polyamine-organocation (APC) superfamily. As to quaternary structure, disulfide-linked heterodimer with the amino acid transport protein SLC3A2/4F2hc. As to expression, expressed in brain, heart, kidney, liver, lung, pancreas, placenta, and skeletal muscle.

Its subcellular location is the cell membrane. It carries out the reaction L-alanine(in) + glycine(out) = L-alanine(out) + glycine(in). It catalyses the reaction L-serine(out) + L-alanine(in) = L-serine(in) + L-alanine(out). The catalysed reaction is L-threonine(out) + L-alanine(in) = L-threonine(in) + L-alanine(out). The enzyme catalyses L-cysteine(out) + L-alanine(in) = L-cysteine(in) + L-alanine(out). It carries out the reaction 2-aminoisobutanoate(out) + L-alanine(in) = 2-aminoisobutanoate(in) + L-alanine(out). It catalyses the reaction D-serine(out) + L-alanine(in) = D-serine(in) + L-alanine(out). The catalysed reaction is D-alanine(out) + L-alanine(in) = D-alanine(in) + L-alanine(out). The enzyme catalyses L-valine(out) + L-alanine(in) = L-valine(in) + L-alanine(out). It carries out the reaction L-methionine(out) + L-alanine(in) = L-methionine(in) + L-alanine(out). It catalyses the reaction beta-alanine(out) + L-alanine(in) = beta-alanine(in) + L-alanine(out). The catalysed reaction is D-cysteine(out) + L-alanine(in) = D-cysteine(in) + L-alanine(out). The enzyme catalyses D-threonine(out) + L-alanine(in) = D-threonine(in) + L-alanine(out). It carries out the reaction D-isoleucine(out) + D-serine(in) = D-isoleucine(in) + D-serine(out). It catalyses the reaction D-serine(in) = D-serine(out). In terms of biological role, associates with SLC3A2/4F2hc to form a functional heterodimeric complex that translocates small neutral L- and D-amino acids across the plasma membrane. Preferentially mediates exchange transport, but can also operate via facilitated diffusion. Acts as a major transporter for glycine, L- and D-serine in the central nervous system. At the spinal cord and brainstem regulates glycine metabolism and glycinergic inhibitory neurotransmission by providing for glycine de novo synthesis from L-serine and glycine recycling from astrocytes to glycinergic motor neurons. At Schaffer collateral-CA1 synapses mediates D-serine and glycine release that modulates post-synaptic activation of NMDA receptors and excitatory glutamatergic transmission. May regulate D-serine release from mesenchymal progenitors located in developing subcutaneous adipose tissue, favoring white adipocyte over thermogenic beige adipocyte lineage commitment. This chain is Asc-type amino acid transporter 1 (SLC7A10), found in Homo sapiens (Human).